We begin with the raw amino-acid sequence, 464 residues long: 3-isopropylmalate dehydratase large subunit (464 aa).

[4Fe-4S] cluster-binding residues include Cys337, Cys397, and Cys400.

The protein belongs to the aconitase/IPM isomerase family. LeuC type 1 subfamily. As to quaternary structure, heterodimer of LeuC and LeuD. [4Fe-4S] cluster serves as cofactor.

It carries out the reaction (2R,3S)-3-isopropylmalate = (2S)-2-isopropylmalate. It participates in amino-acid biosynthesis; L-leucine biosynthesis; L-leucine from 3-methyl-2-oxobutanoate: step 2/4. In terms of biological role, catalyzes the isomerization between 2-isopropylmalate and 3-isopropylmalate, via the formation of 2-isopropylmaleate. The sequence is that of 3-isopropylmalate dehydratase large subunit from Bacillus thuringiensis subsp. konkukian (strain 97-27).